The following is a 260-amino-acid chain: Exosome complex component Rrp42 (260 aa).

The protein belongs to the RNase PH family. Rrp42 subfamily. In terms of assembly, component of the archaeal exosome complex. Forms a hexameric ring-like arrangement composed of 3 Rrp41-Rrp42 heterodimers. The hexameric ring associates with a trimer of Rrp4 and/or Csl4 subunits.

It localises to the cytoplasm. In terms of biological role, non-catalytic component of the exosome, which is a complex involved in RNA degradation. Contributes to the structuring of the Rrp41 active site. In Methanocella arvoryzae (strain DSM 22066 / NBRC 105507 / MRE50), this protein is Exosome complex component Rrp42.